The primary structure comprises 93 residues: MASGQQERSELDRMAREGETVVPGGTGGKSLEAQEHLADGRSRGGETRKEQLGEEGYREMGRKGGLSTMEESGGERAAREGIEIDESKFKTKS.

The tract at residues 1 to 93 (MASGQQERSE…IDESKFKTKS (93 aa)) is disordered. Basic and acidic residues-rich tracts occupy residues 7 to 19 (ERSE…REGE), 32 to 62 (EAQE…EMGR), and 73 to 93 (GGER…KTKS).

It belongs to the small hydrophilic plant seed protein family.

Functionally, it is thought to provide protection for the cytoplasm during the desiccation stage of embryo development. This chain is Em protein H5 (EMH5), found in Triticum aestivum (Wheat).